We begin with the raw amino-acid sequence, 239 residues long: Uridylate kinase (239 aa).

Position 13-16 (13-16 (KLSG)) interacts with ATP. Glycine 55 contacts UMP. ATP-binding residues include glycine 56 and arginine 60. UMP is bound by residues aspartate 75 and 136-143 (TGNPFFTT). Threonine 163, asparagine 164, tyrosine 169, and aspartate 172 together coordinate ATP.

This sequence belongs to the UMP kinase family. As to quaternary structure, homohexamer.

The protein localises to the cytoplasm. The enzyme catalyses UMP + ATP = UDP + ADP. It functions in the pathway pyrimidine metabolism; CTP biosynthesis via de novo pathway; UDP from UMP (UMPK route): step 1/1. With respect to regulation, inhibited by UTP. Catalyzes the reversible phosphorylation of UMP to UDP. This chain is Uridylate kinase, found in Neisseria gonorrhoeae (strain ATCC 700825 / FA 1090).